We begin with the raw amino-acid sequence, 122 residues long: Large ribosomal subunit protein uL14 (122 aa).

This sequence belongs to the universal ribosomal protein uL14 family. As to quaternary structure, part of the 50S ribosomal subunit. Forms a cluster with proteins L3 and L19. In the 70S ribosome, L14 and L19 interact and together make contacts with the 16S rRNA in bridges B5 and B8.

Its function is as follows. Binds to 23S rRNA. Forms part of two intersubunit bridges in the 70S ribosome. The polypeptide is Large ribosomal subunit protein uL14 (Cereibacter sphaeroides (strain ATCC 17029 / ATH 2.4.9) (Rhodobacter sphaeroides)).